Consider the following 468-residue polypeptide: ATP synthase subunit beta (468 aa).

155-162 contributes to the ATP binding site; the sequence is GGAGVGKT.

This sequence belongs to the ATPase alpha/beta chains family. F-type ATPases have 2 components, CF(1) - the catalytic core - and CF(0) - the membrane proton channel. CF(1) has five subunits: alpha(3), beta(3), gamma(1), delta(1), epsilon(1). CF(0) has three main subunits: a(1), b(2) and c(9-12). The alpha and beta chains form an alternating ring which encloses part of the gamma chain. CF(1) is attached to CF(0) by a central stalk formed by the gamma and epsilon chains, while a peripheral stalk is formed by the delta and b chains.

It localises to the cell membrane. The catalysed reaction is ATP + H2O + 4 H(+)(in) = ADP + phosphate + 5 H(+)(out). In terms of biological role, produces ATP from ADP in the presence of a proton gradient across the membrane. The catalytic sites are hosted primarily by the beta subunits. The protein is ATP synthase subunit beta of Streptococcus agalactiae serotype III (strain NEM316).